The primary structure comprises 338 residues: tRNA N6-adenosine threonylcarbamoyltransferase (338 aa).

Residues histidine 110 and histidine 114 each contribute to the Fe cation site. Substrate contacts are provided by residues 132 to 136 (VLSGG), aspartate 165, glycine 178, and asparagine 274. Position 298 (aspartate 298) interacts with Fe cation.

The protein belongs to the KAE1 / TsaD family. It depends on Fe(2+) as a cofactor.

The protein resides in the cytoplasm. It carries out the reaction L-threonylcarbamoyladenylate + adenosine(37) in tRNA = N(6)-L-threonylcarbamoyladenosine(37) in tRNA + AMP + H(+). Its function is as follows. Required for the formation of a threonylcarbamoyl group on adenosine at position 37 (t(6)A37) in tRNAs that read codons beginning with adenine. Is involved in the transfer of the threonylcarbamoyl moiety of threonylcarbamoyl-AMP (TC-AMP) to the N6 group of A37, together with TsaE and TsaB. TsaD likely plays a direct catalytic role in this reaction. The chain is tRNA N6-adenosine threonylcarbamoyltransferase from Borrelia duttonii (strain Ly).